Reading from the N-terminus, the 305-residue chain is NAD kinase 2 (305 aa).

Asp-78 (proton acceptor) is an active-site residue. NAD(+)-binding positions include 78–79 (DG), 152–153 (NE), Asp-182, 193–198 (TAYSLS), and Asn-251.

It belongs to the NAD kinase family. Requires a divalent metal cation as cofactor.

It localises to the cytoplasm. The catalysed reaction is NAD(+) + ATP = ADP + NADP(+) + H(+). Involved in the regulation of the intracellular balance of NAD and NADP, and is a key enzyme in the biosynthesis of NADP. Catalyzes specifically the phosphorylation on 2'-hydroxyl of the adenosine moiety of NAD to yield NADP. In Synechococcus sp. (strain ATCC 27144 / PCC 6301 / SAUG 1402/1) (Anacystis nidulans), this protein is NAD kinase 2.